Reading from the N-terminus, the 368-residue chain is Phosphate acyltransferase (368 aa).

The segment at 338 to 368 is disordered; the sequence is GDGGHDAGGAGTASPAPGHHAEPSAAQSSKA.

Belongs to the PlsX family. In terms of assembly, homodimer. Probably interacts with PlsY.

It is found in the cytoplasm. The catalysed reaction is a fatty acyl-[ACP] + phosphate = an acyl phosphate + holo-[ACP]. Its pathway is lipid metabolism; phospholipid metabolism. Catalyzes the reversible formation of acyl-phosphate (acyl-PO(4)) from acyl-[acyl-carrier-protein] (acyl-ACP). This enzyme utilizes acyl-ACP as fatty acyl donor, but not acyl-CoA. This is Phosphate acyltransferase from Burkholderia ambifaria (strain MC40-6).